An 862-amino-acid polypeptide reads, in one-letter code: Kinesin-like protein KIN-7E (862 aa).

The region spanning 24-346 (KILVLVRLRP…LLFACCAKEV (323 aa)) is the Kinesin motor domain. 110–117 (GQTSSGKT) serves as a coordination point for ATP. The stretch at 355–428 (VMSDKALVKQ…RLEDFMKMVE (74 aa)) forms a coiled coil. 2 disordered regions span residues 463-505 (RTSF…QSEE) and 542-632 (ANGE…TPLV). Polar residues predominate over residues 465–476 (SFISDGTSTPLS). Basic and acidic residues predominate over residues 494 to 505 (MSPRHSGDQSEE). Positions 612 to 621 (DSMTSRGSDS) are enriched in polar residues. Residue K734 forms a Glycyl lysine isopeptide (Lys-Gly) (interchain with G-Cter in ubiquitin) linkage.

Belongs to the TRAFAC class myosin-kinesin ATPase superfamily. Kinesin family. KIN-7 subfamily.

The sequence is that of Kinesin-like protein KIN-7E from Arabidopsis thaliana (Mouse-ear cress).